A 256-amino-acid chain; its full sequence is UPF0246 protein TERTU_4575 (256 aa).

It belongs to the UPF0246 family.

The chain is UPF0246 protein TERTU_4575 from Teredinibacter turnerae (strain ATCC 39867 / T7901).